Consider the following 231-residue polypeptide: Putative cobalt transport protein CbiM 1 (231 aa).

The next 6 membrane-spanning stretches (helical) occupy residues 9–29 (PGPW…YGIF), 41–61 (VLPL…LKLP), 74–94 (GMAV…IVLL), 107–127 (TFGA…YAIY), 135–155 (VNFY…TYVV), and 181–201 (VFAI…TLLF).

It belongs to the CbiM family. In terms of assembly, forms an energy-coupling factor (ECF) transporter complex composed of an ATP-binding protein (A component, CbiO), a transmembrane protein (T component, CbiQ) and 2 possible substrate-capture proteins (S components, CbiM and CbiN) of unknown stoichimetry.

The protein localises to the cell membrane. The protein operates within cofactor biosynthesis; adenosylcobalamin biosynthesis. Part of the energy-coupling factor (ECF) transporter complex CbiMNOQ involved in cobalt import. The chain is Putative cobalt transport protein CbiM 1 from Methanosarcina barkeri (strain Fusaro / DSM 804).